The sequence spans 442 residues: Probable xylan O-acetyltransferase 8 (442 aa).

At 1 to 13 (MVQLPAMKRVKGR) the chain is on the cytoplasmic side. Residues 14 to 34 (APLSVVVAIIGGLALAGIIFT) form a helical; Signal-anchor for type II membrane protein membrane-spanning segment. The Lumenal portion of the chain corresponds to 35–442 (EDLRGLTEVK…TWNRLLYAHL (408 aa)). A glycan (N-linked (GlcNAc...) asparagine) is linked at Asn-96. 4 disulfide bridges follow: Cys-100–Cys-151, Cys-122–Cys-187, Cys-131–Cys-426, and Cys-344–Cys-422. Positions 174–176 (GDS) match the GDS motif motif. The active-site Nucleophile is the Ser-176. N-linked (GlcNAc...) asparagine glycosylation is found at Asn-217, Asn-346, and Asn-384. The active-site Proton donor is Asp-421. The DXXH motif signature appears at 421–424 (DCIH). The active-site Proton acceptor is His-424.

It belongs to the PC-esterase family. TBL subfamily.

It localises to the golgi apparatus membrane. Functionally, probable xylan acetyltransferase required for 2-O- and 3-O-monoacetylation of xylosyl residues in xylan. Possesses extremely low activity in vitro. This chain is Probable xylan O-acetyltransferase 8, found in Oryza sativa subsp. japonica (Rice).